A 431-amino-acid chain; its full sequence is Phosphoribosylamine--glycine ligase (431 aa).

One can recognise an ATP-grasp domain in the interval 109-316; that stretch reads KDFLARHGIP…LVDLVEAAID (208 aa). Position 135-196 (135-196) interacts with ATP; that stretch reads VREKGAPIVV…EEFLDGEEAS (62 aa). Mg(2+) is bound by residues glutamate 286 and asparagine 288.

It belongs to the GARS family. It depends on Mg(2+) as a cofactor. Requires Mn(2+) as cofactor.

It catalyses the reaction 5-phospho-beta-D-ribosylamine + glycine + ATP = N(1)-(5-phospho-beta-D-ribosyl)glycinamide + ADP + phosphate + H(+). Its pathway is purine metabolism; IMP biosynthesis via de novo pathway; N(1)-(5-phospho-D-ribosyl)glycinamide from 5-phospho-alpha-D-ribose 1-diphosphate: step 2/2. This Xanthomonas campestris pv. campestris (strain ATCC 33913 / DSM 3586 / NCPPB 528 / LMG 568 / P 25) protein is Phosphoribosylamine--glycine ligase.